A 342-amino-acid chain; its full sequence is Isopentenyl-diphosphate delta-isomerase (342 aa).

11 to 12 (RK) is a binding site for substrate. Residues serine 68, 69-71 (SMT), serine 99, and asparagine 127 contribute to the FMN site. 99-101 (SMR) provides a ligand contact to substrate. Glutamate 163 is a Mg(2+) binding site. FMN-binding positions include lysine 194, threonine 224, and 295–296 (AG).

This sequence belongs to the IPP isomerase type 2 family. In terms of assembly, homooctamer. Dimer of tetramers. FMN serves as cofactor. It depends on NADPH as a cofactor. The cofactor is Mg(2+).

It localises to the cytoplasm. It carries out the reaction isopentenyl diphosphate = dimethylallyl diphosphate. Functionally, involved in the biosynthesis of isoprenoids. Catalyzes the 1,3-allylic rearrangement of the homoallylic substrate isopentenyl (IPP) to its allylic isomer, dimethylallyl diphosphate (DMAPP). In Rickettsia typhi (strain ATCC VR-144 / Wilmington), this protein is Isopentenyl-diphosphate delta-isomerase.